The primary structure comprises 574 residues: MGNNFSSVSSLQRGNPSRASRGHPQNLKDSIGGSFPVPSHRCHHKQKHCPPTLSGGGLPATPLLFHPHTKGSQILMDLSHKAVKRQASFCNAITFSNRPVLIYEQVRLKITKKQCCWSGALRLGFTSKDPSRIHPDSLPKYACPDLVSQSGFWAKALPEEFANEGNIIAFWVDKKGRVFYRINESAAMLFFSGVRTVDPLWALVDVYGLTRGVQLLDSELVLPDCLRPRSFTALRRPSLRCEADEARLSVSLCDLNVPGADGDDGAPPAGCPIPQNSLNSQHSRALPAQLDGDLRFHALRAGAHVRILDEQTVARLEHGRDERALVFTSRPVRVAETIFIKVTRSGGGRAGALSFGVTTCDPGTLRPADLPFSPEALVDRKEFWAVCRVPGPLHSGDILGLVVNADGELHLSHNGAAAGMQLCVDASQPLWMLFSLHGAITQVRILGSTIMTERGGPSLPCSPASTPTSPSALGIRLSDPLLSTCGSGPLGGSAGGTAPNSPVSLPESPVTPGLGQWSDECTICYEHAVDTVIYTCGHMCLCYSCGLRLKKALHACCPICRRPIKDIIKTYRSS.

Positions 1–18 are enriched in polar residues; it reads MGNNFSSVSSLQRGNPSR. The tract at residues 1-53 is disordered; it reads MGNNFSSVSSLQRGNPSRASRGHPQNLKDSIGGSFPVPSHRCHHKQKHCPPTL. Gly2 is lipidated: N-myristoyl glycine. 2 consecutive NHR domains span residues 61–217 and 292–447; these read TPLL…QLLD and GDLR…RILG. An RING-type zinc finger spans residues 520–560; it reads ECTICYEHAVDTVIYTCGHMCLCYSCGLRLKKALHACCPIC.

In terms of assembly, interacts with CPEB3 (via N-terminal domain); the interaction increases CPEB3 ubiquitination. Interacts with DLL1. Post-translationally, myristoylation is a determinant of membrane targeting. In terms of tissue distribution, expressed in CA1 pyramidal neurons (at protein level). Expressed throughout the adult forebrain, including the cerebral cortex, amygdala, striatum, and CA1 area of the hippocampus. Expressed in sensory neurons of the olfactory epithelium, the vomeronasal organ, mammary gland and skeletal muscle.

It localises to the cytoplasm. Its subcellular location is the perinuclear region. The protein resides in the cell membrane. The protein localises to the perikaryon. It is found in the cell projection. It localises to the dendrite. Its subcellular location is the postsynaptic density. It carries out the reaction S-ubiquitinyl-[E2 ubiquitin-conjugating enzyme]-L-cysteine + [acceptor protein]-L-lysine = [E2 ubiquitin-conjugating enzyme]-L-cysteine + N(6)-ubiquitinyl-[acceptor protein]-L-lysine.. Its pathway is protein modification; protein ubiquitination. In terms of biological role, plays a role in hippocampal-dependent synaptic plasticity, learning and memory. Involved in the formation of spines and functional synaptic contacts by modulating the translational activity of the cytoplasmic polyadenylation element-binding protein CPEB3. Promotes ubiquitination of CPEB3, and hence induces CPEB3-dependent mRNA translation activation of glutamate receptor GRIA1 and GRIA2. Can function as an E3 ubiquitin-protein ligase to activate monoubiquitination of JAG1 (in vitro), thereby regulating the Notch pathway. Acts as a tumor suppressor; inhibits malignant cell transformation of medulloblastoma (MB) cells by inhibiting the Notch signaling pathway. This is E3 ubiquitin-protein ligase NEURL1 (Neurl1) from Mus musculus (Mouse).